Here is a 143-residue protein sequence, read N- to C-terminus: Transcription antitermination protein NusB (143 aa).

The protein belongs to the NusB family.

Involved in transcription antitermination. Required for transcription of ribosomal RNA (rRNA) genes. Binds specifically to the boxA antiterminator sequence of the ribosomal RNA (rrn) operons. This is Transcription antitermination protein NusB from Dehalococcoides mccartyi (strain ATCC BAA-2266 / KCTC 15142 / 195) (Dehalococcoides ethenogenes (strain 195)).